The primary structure comprises 232 residues: Phosphatidylserine decarboxylase proenzyme (232 aa).

Ser190 acts as the Schiff-base intermediate with substrate; via pyruvic acid in catalysis. Residue Ser190 is modified to Pyruvic acid (Ser); by autocatalysis.

The protein belongs to the phosphatidylserine decarboxylase family. PSD-A subfamily. In terms of assembly, heterodimer of a large membrane-associated beta subunit and a small pyruvoyl-containing alpha subunit. The cofactor is pyruvate. In terms of processing, is synthesized initially as an inactive proenzyme. Formation of the active enzyme involves a self-maturation process in which the active site pyruvoyl group is generated from an internal serine residue via an autocatalytic post-translational modification. Two non-identical subunits are generated from the proenzyme in this reaction, and the pyruvate is formed at the N-terminus of the alpha chain, which is derived from the carboxyl end of the proenzyme. The post-translation cleavage follows an unusual pathway, termed non-hydrolytic serinolysis, in which the side chain hydroxyl group of the serine supplies its oxygen atom to form the C-terminus of the beta chain, while the remainder of the serine residue undergoes an oxidative deamination to produce ammonia and the pyruvoyl prosthetic group on the alpha chain.

It localises to the cell membrane. It carries out the reaction a 1,2-diacyl-sn-glycero-3-phospho-L-serine + H(+) = a 1,2-diacyl-sn-glycero-3-phosphoethanolamine + CO2. The protein operates within phospholipid metabolism; phosphatidylethanolamine biosynthesis; phosphatidylethanolamine from CDP-diacylglycerol: step 2/2. Functionally, catalyzes the formation of phosphatidylethanolamine (PtdEtn) from phosphatidylserine (PtdSer). This Rhodopseudomonas palustris (strain BisB18) protein is Phosphatidylserine decarboxylase proenzyme.